The chain runs to 281 residues: Streptomycin biosynthesis protein StrF (281 aa).

It participates in antibiotic biosynthesis; streptomycin biosynthesis. In terms of biological role, may be involved in the formation of N-methyl-L-glucosamine. In Streptomyces griseus, this protein is Streptomycin biosynthesis protein StrF (strF).